The chain runs to 618 residues: Proline--tRNA ligase (618 aa).

Belongs to the class-II aminoacyl-tRNA synthetase family. ProS type 1 subfamily. As to quaternary structure, homodimer.

It localises to the cytoplasm. It carries out the reaction tRNA(Pro) + L-proline + ATP = L-prolyl-tRNA(Pro) + AMP + diphosphate. Its function is as follows. Catalyzes the attachment of proline to tRNA(Pro) in a two-step reaction: proline is first activated by ATP to form Pro-AMP and then transferred to the acceptor end of tRNA(Pro). As ProRS can inadvertently accommodate and process non-cognate amino acids such as alanine and cysteine, to avoid such errors it has two additional distinct editing activities against alanine. One activity is designated as 'pretransfer' editing and involves the tRNA(Pro)-independent hydrolysis of activated Ala-AMP. The other activity is designated 'posttransfer' editing and involves deacylation of mischarged Ala-tRNA(Pro). The misacylated Cys-tRNA(Pro) is not edited by ProRS. This Streptococcus pyogenes serotype M3 (strain ATCC BAA-595 / MGAS315) protein is Proline--tRNA ligase.